The sequence spans 447 residues: Ribosomal protein uS12 methylthiotransferase RimO (447 aa).

The MTTase N-terminal domain maps to 4–114 (PKVGFVSLGC…VMEAVHEYVP (111 aa)). C13, C49, C78, C147, C151, and C154 together coordinate [4Fe-4S] cluster. The 238-residue stretch at 133-370 (LTPKHYAYLK…MQVQQQISAA (238 aa)) folds into the Radical SAM core domain. The TRAM domain occupies 373-443 (QKRIGQTMTV…EYDLFAKLIK (71 aa)).

This sequence belongs to the methylthiotransferase family. RimO subfamily. The cofactor is [4Fe-4S] cluster.

The protein localises to the cytoplasm. It catalyses the reaction L-aspartate(89)-[ribosomal protein uS12]-hydrogen + (sulfur carrier)-SH + AH2 + 2 S-adenosyl-L-methionine = 3-methylsulfanyl-L-aspartate(89)-[ribosomal protein uS12]-hydrogen + (sulfur carrier)-H + 5'-deoxyadenosine + L-methionine + A + S-adenosyl-L-homocysteine + 2 H(+). Its function is as follows. Catalyzes the methylthiolation of an aspartic acid residue of ribosomal protein uS12. The polypeptide is Ribosomal protein uS12 methylthiotransferase RimO (Acinetobacter baumannii (strain SDF)).